A 183-amino-acid chain; its full sequence is UPF0200 protein MMP1282 (183 aa).

Residue 8–15 (GMPGSGKS) coordinates ATP.

The protein belongs to the UPF0200 family.

The chain is UPF0200 protein MMP1282 from Methanococcus maripaludis (strain DSM 14266 / JCM 13030 / NBRC 101832 / S2 / LL).